Consider the following 234-residue polypeptide: Ubiquinone biosynthesis O-methyltransferase (234 aa).

S-adenosyl-L-methionine contacts are provided by R39, G59, D80, and M124.

It belongs to the methyltransferase superfamily. UbiG/COQ3 family.

It catalyses the reaction a 3-demethylubiquinol + S-adenosyl-L-methionine = a ubiquinol + S-adenosyl-L-homocysteine + H(+). It carries out the reaction a 3-(all-trans-polyprenyl)benzene-1,2-diol + S-adenosyl-L-methionine = a 2-methoxy-6-(all-trans-polyprenyl)phenol + S-adenosyl-L-homocysteine + H(+). It functions in the pathway cofactor biosynthesis; ubiquinone biosynthesis. Its function is as follows. O-methyltransferase that catalyzes the 2 O-methylation steps in the ubiquinone biosynthetic pathway. The protein is Ubiquinone biosynthesis O-methyltransferase of Aliivibrio fischeri (strain MJ11) (Vibrio fischeri).